We begin with the raw amino-acid sequence, 1675 residues long: Coadhesin (1675 aa).

Residues 1–1356 are Extracellular-facing; the sequence is QGNYYSYGGT…TIADQADAAK (1356 aa). The F5/8 type C 1 domain occupies 11–160; sequence TPGTPIGCTN…ICMRVGVESC (150 aa). 7 consecutive TSP type-1 domains span residues 168 to 220, 224 to 279, 281 to 336, 338 to 393, 403 to 458, 460 to 515, and 517 to 572; these read NGAW…NDCV, NGGW…QFCP, DGGW…QCCP, HGGW…QTCP, NGNY…IPCP, NGNW…TACP, and DGGW…GPCP. Intrachain disulfides connect cysteine 180–cysteine 216, cysteine 184–cysteine 219, cysteine 194–cysteine 206, cysteine 236–cysteine 273, cysteine 240–cysteine 278, cysteine 251–cysteine 263, cysteine 293–cysteine 330, cysteine 297–cysteine 335, cysteine 308–cysteine 320, cysteine 350–cysteine 387, cysteine 354–cysteine 392, cysteine 365–cysteine 377, cysteine 415–cysteine 452, cysteine 419–cysteine 457, cysteine 430–cysteine 442, cysteine 472–cysteine 509, cysteine 476–cysteine 514, cysteine 487–cysteine 499, cysteine 528–cysteine 566, cysteine 532–cysteine 571, and cysteine 543–cysteine 555. The interval 567–588 is disordered; that stretch reads NKGPCPTSPPTISPPTTGSPAD. 3 consecutive VWFA domains span residues 595–769, 778–958, and 966–1141; these read DLVF…MDRI, DIGF…FKAL, and DLTF…ISII. Positions 1144–1198 constitute a TSP type-1 8 domain; that stretch reads PSGLSKWSSWSACSKTCRYLGKAGTQIRTRDCKIPELGCDGMRIDTVECNKMDCE. Disulfide bonds link cysteine 1156-cysteine 1192, cysteine 1160-cysteine 1197, and cysteine 1175-cysteine 1182. The F5/8 type C 2 domain occupies 1192–1336; that stretch reads CNKMDCEGCG…PCMQAAVFGC (145 aa). The helical transmembrane segment at 1357 to 1377 threads the bilayer; that stretch reads GILIVLWILAGILTFLLLMAC. Over 1378–1675 the chain is Cytoplasmic; that stretch reads CYYCCWHVCC…RGEEWYSRWG (298 aa). Residues 1463 to 1480 are compositionally biased toward basic and acidic residues; the sequence is EKHVTAEDVKSEKPKYSE. The tract at residues 1463–1491 is disordered; the sequence is EKHVTAEDVKSEKPKYSEEASSGTIKSGS. Residues 1481–1491 show a composition bias toward polar residues; that stretch reads EASSGTIKSGS.

Component of the acid-insoluble and acid-soluble organic matrix of the aragonitic skeleton (at protein level).

It localises to the membrane. This Acropora millepora (Staghorn coral) protein is Coadhesin.